Consider the following 431-residue polypeptide: Enolase (431 aa).

Residues His157 and Glu166 each coordinate substrate. The active-site Proton donor is the Glu209. Mg(2+)-binding residues include Asp244, Glu293, and Asp318. Glu293 and Asp318 together coordinate substrate. The active-site Proton acceptor is the Lys343. Substrate-binding positions include 370-373 (SHRS) and Lys394.

The protein belongs to the enolase family. As to quaternary structure, homodimer. It depends on Mg(2+) as a cofactor.

The protein resides in the cytoplasm. The enzyme catalyses (2R)-2-phosphoglycerate = phosphoenolpyruvate + H2O. Its pathway is carbohydrate degradation; glycolysis; pyruvate from D-glyceraldehyde 3-phosphate: step 4/5. The protein is Enolase (ENO) of Fasciola hepatica (Liver fluke).